Here is a 565-residue protein sequence, read N- to C-terminus: NAD-dependent malic enzyme (565 aa).

Y104 (proton donor) is an active-site residue. NAD(+) is bound at residue R157. K175 acts as the Proton acceptor in catalysis. The a divalent metal cation site is built by E246, D247, and D270. Residues D270 and N418 each contribute to the NAD(+) site.

It belongs to the malic enzymes family. Homotetramer. Mg(2+) serves as cofactor. The cofactor is Mn(2+).

The catalysed reaction is (S)-malate + NAD(+) = pyruvate + CO2 + NADH. It catalyses the reaction oxaloacetate + H(+) = pyruvate + CO2. In Edwardsiella ictaluri (strain 93-146), this protein is NAD-dependent malic enzyme.